Reading from the N-terminus, the 321-residue chain is Biotin synthase (321 aa).

The Radical SAM core domain maps to 45-271 (YYGKKVKLNM…INPTKEIRIA (227 aa)). Positions 63, 67, and 70 each coordinate [4Fe-4S] cluster. Cys-106, Cys-139, Cys-199, and Arg-269 together coordinate [2Fe-2S] cluster.

Belongs to the radical SAM superfamily. Biotin synthase family. As to quaternary structure, homodimer. [4Fe-4S] cluster is required as a cofactor. It depends on [2Fe-2S] cluster as a cofactor.

It carries out the reaction (4R,5S)-dethiobiotin + (sulfur carrier)-SH + 2 reduced [2Fe-2S]-[ferredoxin] + 2 S-adenosyl-L-methionine = (sulfur carrier)-H + biotin + 2 5'-deoxyadenosine + 2 L-methionine + 2 oxidized [2Fe-2S]-[ferredoxin]. The protein operates within cofactor biosynthesis; biotin biosynthesis; biotin from 7,8-diaminononanoate: step 2/2. Catalyzes the conversion of dethiobiotin (DTB) to biotin by the insertion of a sulfur atom into dethiobiotin via a radical-based mechanism. This chain is Biotin synthase, found in Staphylococcus epidermidis (strain ATCC 35984 / DSM 28319 / BCRC 17069 / CCUG 31568 / BM 3577 / RP62A).